The sequence spans 239 residues: UPF0173 metal-dependent hydrolase Msm_0779 (239 aa).

Belongs to the UPF0173 family.

The protein is UPF0173 metal-dependent hydrolase Msm_0779 of Methanobrevibacter smithii (strain ATCC 35061 / DSM 861 / OCM 144 / PS).